Reading from the N-terminus, the 177-residue chain is Alkyl hydroperoxide reductase AhpD (177 aa).

C130 serves as the catalytic Proton donor. An intrachain disulfide couples C130 to C133. C133 functions as the Cysteine sulfenic acid (-SOH) intermediate in the catalytic mechanism.

It belongs to the AhpD family. Homotrimer.

It carries out the reaction N(6)-[(R)-dihydrolipoyl]-L-lysyl-[lipoyl-carrier protein] + a hydroperoxide = N(6)-[(R)-lipoyl]-L-lysyl-[lipoyl-carrier protein] + an alcohol + H2O. In terms of biological role, antioxidant protein with alkyl hydroperoxidase activity. Required for the reduction of the AhpC active site cysteine residues and for the regeneration of the AhpC enzyme activity. In Mycobacterium bovis (strain ATCC BAA-935 / AF2122/97), this protein is Alkyl hydroperoxide reductase AhpD.